Consider the following 230-residue polypeptide: ATP-dependent dethiobiotin synthetase BioD (230 aa).

Residue 12 to 17 (DIGKTH) participates in ATP binding. Thr-16 serves as a coordination point for Mg(2+). The active site involves Lys-37. Ser-41 contributes to the substrate binding site. ATP-binding positions include Asp-52, 115-118 (EGAG), and 175-176 (SE). Residues Asp-52 and Glu-115 each contribute to the Mg(2+) site.

This sequence belongs to the dethiobiotin synthetase family. As to quaternary structure, homodimer. Requires Mg(2+) as cofactor.

Its subcellular location is the cytoplasm. The catalysed reaction is (7R,8S)-7,8-diammoniononanoate + CO2 + ATP = (4R,5S)-dethiobiotin + ADP + phosphate + 3 H(+). The protein operates within cofactor biosynthesis; biotin biosynthesis; biotin from 7,8-diaminononanoate: step 1/2. Its function is as follows. Catalyzes a mechanistically unusual reaction, the ATP-dependent insertion of CO2 between the N7 and N8 nitrogen atoms of 7,8-diaminopelargonic acid (DAPA, also called 7,8-diammoniononanoate) to form a ureido ring. This is ATP-dependent dethiobiotin synthetase BioD from Caulobacter sp. (strain K31).